A 387-amino-acid polypeptide reads, in one-letter code: Cystathionine gamma-lyase (387 aa).

Positions 53, 105, and 110 each coordinate substrate. N6-(pyridoxal phosphate)lysine is present on lysine 202. Substrate is bound at residue glutamate 329.

The protein belongs to the trans-sulfuration enzymes family. In terms of assembly, homotetramer. Interacts with CALM in a calcium-dependent manner. Pyridoxal 5'-phosphate serves as cofactor.

It localises to the cytoplasm. The enzyme catalyses L,L-cystathionine + H2O = 2-oxobutanoate + L-cysteine + NH4(+). The catalysed reaction is L-cysteine + H2O = hydrogen sulfide + pyruvate + NH4(+) + H(+). It catalyses the reaction L-homocysteine + H2O = 2-oxobutanoate + hydrogen sulfide + NH4(+) + H(+). It carries out the reaction L-homoserine = 2-oxobutanoate + NH4(+). The protein operates within amino-acid biosynthesis; L-cysteine biosynthesis; L-cysteine from L-homocysteine and L-serine: step 2/2. Functionally, catalyzes the last step in the trans-sulfuration pathway from L-methionine to L-cysteine in a pyridoxal-5'-phosphate (PLP)-dependent manner, which consists on cleaving the L,L-cystathionine molecule into L-cysteine, ammonia and 2-oxobutanoate. Part of the L-cysteine derived from the trans-sulfuration pathway is utilized for biosynthesis of the ubiquitous antioxidant glutathione. Besides its role in the conversion of L-cystathionine into L-cysteine, it utilizes L-cysteine and L-homocysteine as substrates (at much lower rates than L,L-cystathionine) to produce the endogenous gaseous signaling molecule hydrogen sulfide (H2S). The protein is Cystathionine gamma-lyase (cysA) of Dictyostelium discoideum (Social amoeba).